Reading from the N-terminus, the 400-residue chain is Subtilisin-like protease 7 (400 aa).

Residues 1–20 (MGFITKAIPLALAAASVING) form the signal peptide. Positions 21–119 (AEIMETRAGV…IERDARVQIN (99 aa)) are excised as a propeptide. The Inhibitor I9 domain maps to 36-118 (KYIVVMNDGM…YIERDARVQI (83 aa)). N58 is a glycosylation site (N-linked (GlcNAc...) asparagine). A Peptidase S8 domain is found at 129–400 (SWGLARVGSK…SKLINNGSGM (272 aa)). Catalysis depends on charge relay system residues D161 and H192. N-linked (GlcNAc...) asparagine glycosylation is found at N222 and N252. S346 serves as the catalytic Charge relay system. N396 carries N-linked (GlcNAc...) asparagine glycosylation.

This sequence belongs to the peptidase S8 family.

Its subcellular location is the secreted. In terms of biological role, secreted subtilisin-like serine protease with keratinolytic activity that contributes to pathogenicity. This Trichophyton verrucosum (Cattle ringworm fungus) protein is Subtilisin-like protease 7 (SUB7).